The sequence spans 20 residues: 7.2 kDa cytotoxin RVV-7 (20 aa).

Monomer. Homodimerizes during storage at 30 degrees Celsius (observed after 3 days). In terms of tissue distribution, expressed by the venom gland.

Its subcellular location is the secreted. It is found in the target cell membrane. In terms of biological role, this three-finger cytotoxin shows cytotoxicity and direct nephrotoxicity. The cytotoxicity has been observed on B16F10 melanoma cells (EC(50)=2.56 uM) and on kidney proximal tubular epithelium LLCPK1 cells (EC(50)=4.79 uM); it is due to necrotic cell death and not to apoptosis. Direct nephrotoxicity has been deduced from binding to LLCPK1 cell line and to kidney membranes. In addition, after intravenous injection into mice tail vein, the toxin principally accumulates in kidney, but only minimally in blood, liver and brain. This is 7.2 kDa cytotoxin RVV-7 from Daboia russelii (Russel's viper).